The chain runs to 296 residues: Bifunctional protein FolD (296 aa).

NADP(+) contacts are provided by residues 170-172 (GRS) and serine 195.

It belongs to the tetrahydrofolate dehydrogenase/cyclohydrolase family. In terms of assembly, homodimer.

It carries out the reaction (6R)-5,10-methylene-5,6,7,8-tetrahydrofolate + NADP(+) = (6R)-5,10-methenyltetrahydrofolate + NADPH. The enzyme catalyses (6R)-5,10-methenyltetrahydrofolate + H2O = (6R)-10-formyltetrahydrofolate + H(+). Its pathway is one-carbon metabolism; tetrahydrofolate interconversion. Functionally, catalyzes the oxidation of 5,10-methylenetetrahydrofolate to 5,10-methenyltetrahydrofolate and then the hydrolysis of 5,10-methenyltetrahydrofolate to 10-formyltetrahydrofolate. The polypeptide is Bifunctional protein FolD (Rhodospirillum rubrum (strain ATCC 11170 / ATH 1.1.1 / DSM 467 / LMG 4362 / NCIMB 8255 / S1)).